The primary structure comprises 696 residues: Transcriptional activator of proteases prtT (696 aa).

The interval 106–126 (DVADGSGRPESSTSGDTIRPK) is disordered. The segment at residues 136-165 (CNTCRKLKTRCDLDPRGHACRRCLSLRIEC) is a DNA-binding region (zn(2)-C6 fungal-type).

It belongs to the prtT family.

The protein localises to the nucleus. In terms of biological role, transcription factor required for protein utilization and degradation. Regulates transcription of major secreted proteases including a serine alkaline protease (alk1), a metalloprotease (mep), an aspergillopepsin (pep1), a sedolisin (sed2) and two dipeptidyl-peptidases (dppIV and dppV). However, it is not a virulence determinant in leukopenic mice. This Aspergillus fumigatus (strain ATCC MYA-4609 / CBS 101355 / FGSC A1100 / Af293) (Neosartorya fumigata) protein is Transcriptional activator of proteases prtT (prtT).